Here is a 630-residue protein sequence, read N- to C-terminus: Probable potassium transport system protein Kup 2 (630 aa).

The next 12 membrane-spanning stretches (helical) occupy residues A14–T34, V56–K76, V108–T128, P145–F165, A176–I196, F214–T234, W255–L275, L293–I313, M352–A372, Y375–W395, P402–A422, and L427–T447.

The protein belongs to the HAK/KUP transporter (TC 2.A.72) family.

The protein localises to the cell inner membrane. The enzyme catalyses K(+)(in) + H(+)(in) = K(+)(out) + H(+)(out). Its function is as follows. Transport of potassium into the cell. Likely operates as a K(+):H(+) symporter. The protein is Probable potassium transport system protein Kup 2 of Rhodopseudomonas palustris (strain BisA53).